Here is a 128-residue protein sequence, read N- to C-terminus: B2 protein (128 aa).

Positions 1-10 (SLILLVAVQA) are cleaved as a signal peptide. 2 disulfide bridges follow: C26/C57 and C97/C114.

This sequence belongs to the PBP/GOBP family. N-glycosylated. Tubular accessory sex gland.

The protein resides in the secreted. Functionally, may be a carrier protein for lipids. In Tenebrio molitor (Yellow mealworm beetle), this protein is B2 protein.